The following is a 423-amino-acid chain: Glutamine synthetase, chloroplastic (423 aa).

The transit peptide at M1–V51 directs the protein to the chloroplast. The 81-residue stretch at V70–G150 folds into the GS beta-grasp domain. The tract at residues R89–P115 is disordered. The GS catalytic domain maps to P154–V423.

This sequence belongs to the glutamine synthetase family. As to quaternary structure, homooctamer.

Its subcellular location is the plastid. The protein localises to the chloroplast. The enzyme catalyses L-glutamate + NH4(+) + ATP = L-glutamine + ADP + phosphate + H(+). In terms of biological role, the light-modulated chloroplast enzyme, encoded by a nuclear gene and expressed primarily in leaves, is responsible for the reassimilation of the ammonia generated by photorespiration. The sequence is that of Glutamine synthetase, chloroplastic (GLN2) from Zea mays (Maize).